The primary structure comprises 130 residues: Large ribosomal subunit protein bL20c (130 aa).

It belongs to the bacterial ribosomal protein bL20 family.

The protein resides in the plastid. It is found in the chloroplast. In terms of biological role, binds directly to 23S ribosomal RNA and is necessary for the in vitro assembly process of the 50S ribosomal subunit. It is not involved in the protein synthesizing functions of that subunit. This chain is Large ribosomal subunit protein bL20c, found in Oenothera argillicola (Appalachian evening primrose).